A 318-amino-acid polypeptide reads, in one-letter code: UDP-N-acetylenolpyruvoylglucosamine reductase (318 aa).

The region spanning 38-204 is the FAD-binding PCMH-type domain; it reads IGGICPVVVE…LGIEILLKEG (167 aa). Arg-182 is an active-site residue. The disordered stretch occupies residues 212-232; that stretch reads SLKDKRDRRNSSQPENKKSAG. The segment covering 213 to 229 has biased composition (basic and acidic residues); it reads LKDKRDRRNSSQPENKK. Residue Ser-233 is the Proton donor of the active site. Residue Glu-310 is part of the active site.

This sequence belongs to the MurB family. FAD serves as cofactor.

It localises to the cytoplasm. It carries out the reaction UDP-N-acetyl-alpha-D-muramate + NADP(+) = UDP-N-acetyl-3-O-(1-carboxyvinyl)-alpha-D-glucosamine + NADPH + H(+). It functions in the pathway cell wall biogenesis; peptidoglycan biosynthesis. In terms of biological role, cell wall formation. In Leptospira borgpetersenii serovar Hardjo-bovis (strain L550), this protein is UDP-N-acetylenolpyruvoylglucosamine reductase.